Reading from the N-terminus, the 31-residue chain is Gamma-conotoxin-like As7a (31 aa).

3 disulfides stabilise this stretch: Cys-2-Cys-16, Cys-9-Cys-20, and Cys-15-Cys-31. 4-carboxyglutamate is present on Glu-14.

This sequence belongs to the conotoxin O1 superfamily. Expressed by the venom duct.

Its subcellular location is the secreted. In terms of biological role, gamma-conotoxins may act on voltage-gated non-specific cation pacemaker channels (HCN). Elicits toxic effects in the freshwater snail Pomacea paludosa after intramuscular injection, but it has no effect when injected intracerebrally into mice. This chain is Gamma-conotoxin-like As7a, found in Conus cancellatus (Cancellate cone).